The chain runs to 598 residues: Elongation factor 4 (598 aa).

The tr-type G domain maps to 4 to 186; that stretch reads INIRNFAIIA…AIVSRLPAPS (183 aa). Residues 16–21 and 133–136 contribute to the GTP site; these read DHGKST and NKID.

The protein belongs to the TRAFAC class translation factor GTPase superfamily. Classic translation factor GTPase family. LepA subfamily.

Its subcellular location is the cell inner membrane. It carries out the reaction GTP + H2O = GDP + phosphate + H(+). Functionally, required for accurate and efficient protein synthesis under certain stress conditions. May act as a fidelity factor of the translation reaction, by catalyzing a one-codon backward translocation of tRNAs on improperly translocated ribosomes. Back-translocation proceeds from a post-translocation (POST) complex to a pre-translocation (PRE) complex, thus giving elongation factor G a second chance to translocate the tRNAs correctly. Binds to ribosomes in a GTP-dependent manner. The protein is Elongation factor 4 of Ehrlichia ruminantium (strain Welgevonden).